Consider the following 461-residue polypeptide: Homocitrate synthase (461 aa).

The Pyruvate carboxyltransferase domain maps to 4-259; the sequence is VGILDSTLRE…IEVVKLDKLQ (256 aa). Position 12 (Arg12) interacts with 2-oxoglutarate. Glu13 lines the Mg(2+) pocket. 2-oxoglutarate is bound by residues His76, Arg136, and Thr170. Mg(2+) contacts are provided by His198 and His200. His292 (proton acceptor) is an active-site residue.

It belongs to the alpha-IPM synthase/homocitrate synthase family. Homocitrate synthase LYS20/LYS21 subfamily. It depends on Mg(2+) as a cofactor. Requires Mn(2+) as cofactor.

It carries out the reaction acetyl-CoA + 2-oxoglutarate + H2O = (2R)-homocitrate + CoA + H(+). It functions in the pathway amino-acid biosynthesis; L-lysine biosynthesis via AAA pathway; L-alpha-aminoadipate from 2-oxoglutarate: step 1/5. Its function is as follows. Catalyzes the aldol-type condensation of 2-oxoglutarate with acetyl-CoA to yield homocitrate. Carries out the first step of the alpha-aminoadipate (AAA) lysine biosynthesis pathway. This Saccharolobus islandicus (strain L.S.2.15 / Lassen #1) (Sulfolobus islandicus) protein is Homocitrate synthase.